A 429-amino-acid chain; its full sequence is D-amino acid dehydrogenase (429 aa).

3–17 (VLILGSGVIGTTTAW) provides a ligand contact to FAD.

Belongs to the DadA oxidoreductase family. Requires FAD as cofactor.

It catalyses the reaction a D-alpha-amino acid + A + H2O = a 2-oxocarboxylate + AH2 + NH4(+). Its pathway is amino-acid degradation; D-alanine degradation; NH(3) and pyruvate from D-alanine: step 1/1. Oxidative deamination of D-amino acids. The polypeptide is D-amino acid dehydrogenase (Xanthomonas campestris pv. campestris (strain 8004)).